Reading from the N-terminus, the 510-residue chain is Glutamyl-tRNA(Gln) amidotransferase subunit A (510 aa).

Active-site charge relay system residues include Lys-75 and Ser-150. The Acyl-ester intermediate role is filled by Ser-174. Positions 471 to 510 are disordered; that stretch reads DWHKRRPPLGQPSVKEGQGSDPGQPQAKRRSGKRSKKSKS. The span at 497 to 510 shows a compositional bias: basic residues; sequence AKRRSGKRSKKSKS.

This sequence belongs to the amidase family. GatA subfamily. As to quaternary structure, heterotrimer of A, B and C subunits.

The enzyme catalyses L-glutamyl-tRNA(Gln) + L-glutamine + ATP + H2O = L-glutaminyl-tRNA(Gln) + L-glutamate + ADP + phosphate + H(+). Allows the formation of correctly charged Gln-tRNA(Gln) through the transamidation of misacylated Glu-tRNA(Gln) in organisms which lack glutaminyl-tRNA synthetase. The reaction takes place in the presence of glutamine and ATP through an activated gamma-phospho-Glu-tRNA(Gln). The protein is Glutamyl-tRNA(Gln) amidotransferase subunit A of Synechococcus sp. (strain JA-2-3B'a(2-13)) (Cyanobacteria bacterium Yellowstone B-Prime).